Here is a 643-residue protein sequence, read N- to C-terminus: Translation factor GUF1, mitochondrial (643 aa).

A mitochondrion-targeting transit peptide spans 1–18 (MLASQAIKRIFHRSWKPL). One can recognise a tr-type G domain in the interval 43-226 (ENYRNFSIVA…AIIDRIPPPT (184 aa)). GTP-binding positions include 52 to 59 (AHIDHGKS), 118 to 122 (DTPGH), and 172 to 175 (NKID).

This sequence belongs to the TRAFAC class translation factor GTPase superfamily. Classic translation factor GTPase family. LepA subfamily.

It localises to the mitochondrion inner membrane. It catalyses the reaction GTP + H2O = GDP + phosphate + H(+). Functionally, promotes mitochondrial protein synthesis. May act as a fidelity factor of the translation reaction, by catalyzing a one-codon backward translocation of tRNAs on improperly translocated ribosomes. Binds to mitochondrial ribosomes in a GTP-dependent manner. The protein is Translation factor GUF1, mitochondrial of Zygosaccharomyces rouxii (strain ATCC 2623 / CBS 732 / NBRC 1130 / NCYC 568 / NRRL Y-229).